Reading from the N-terminus, the 112-residue chain is Protein FAM32A (112 aa).

Positions 15–35 are disordered; that stretch reads KGCGDMSLGKKKKKKNKANDQ.

It belongs to the FAM32 family.

Its subcellular location is the nucleus. Its function is as follows. May induce G2 arrest and apoptosis. May also increase cell sensitivity to apoptotic stimuli. The sequence is that of Protein FAM32A (fam32a) from Xenopus tropicalis (Western clawed frog).